The primary structure comprises 302 residues: 1D-myo-inositol 2-acetamido-2-deoxy-alpha-D-glucopyranoside deacetylase (302 aa).

Residues His13, Asp16, and His155 each coordinate Zn(2+).

This sequence belongs to the MshB deacetylase family. The cofactor is Zn(2+).

It carries out the reaction 1D-myo-inositol 2-acetamido-2-deoxy-alpha-D-glucopyranoside + H2O = 1D-myo-inositol 2-amino-2-deoxy-alpha-D-glucopyranoside + acetate. Its function is as follows. Catalyzes the deacetylation of 1D-myo-inositol 2-acetamido-2-deoxy-alpha-D-glucopyranoside (GlcNAc-Ins) in the mycothiol biosynthesis pathway. The chain is 1D-myo-inositol 2-acetamido-2-deoxy-alpha-D-glucopyranoside deacetylase from Nocardioides sp. (strain ATCC BAA-499 / JS614).